Here is a 230-residue protein sequence, read N- to C-terminus: 3-beta-hydroxysteroid-Delta(8),Delta(7)-isomerase (230 aa).

Residue T2 is modified to N-acetylthreonine. A run of 4 helical transmembrane segments spans residues 29 to 49 (WHIL…TWLL), 66 to 86 (LCWF…FVLY), 121 to 141 (METI…IAFL), and 185 to 205 (FWFY…VLVL). Residues 61–204 (WRRLSLCWFA…LWLVLPGVLV (144 aa)) enclose the EXPERA domain.

Belongs to the EBP family.

The protein resides in the endoplasmic reticulum membrane. It localises to the nucleus envelope. Its subcellular location is the cytoplasmic vesicle. It catalyses the reaction lathosterol = 5alpha-cholest-8-en-3beta-ol. The catalysed reaction is zymosterol = 5alpha-cholesta-7,24-dien-3beta-ol. The enzyme catalyses 5,6alpha-epoxy-5alpha-cholestan-3beta-ol + H2O = 5alpha-cholestane-3beta,5,6beta-triol. It carries out the reaction 5,6beta-epoxy-5beta-cholestan-3beta-ol + H2O = 5alpha-cholestane-3beta,5,6beta-triol. It participates in steroid biosynthesis; cholesterol biosynthesis. With respect to regulation, cholestenol Delta-isomerase and cholesterol-5,6-epoxide hydrolase (ChEH) activities are inhibited by tamoxifen and the selective AEBS ligand (4-benzyl-phenoxy)-ethyl-N-pyrrolidine (PBPE). ChEH activity is inhibited by oleic acid. Its function is as follows. Isomerase that catalyzes the conversion of Delta(8)-sterols to their corresponding Delta(7)-isomers a catalytic step in the postlanosterol biosynthesis of cholesterol. Component of the microsomal antiestrogen binding site (AEBS), a multiproteic complex at the ER membrane that consists of an association between EBP and 7-dehydrocholesterol reductase/DHCR7. This complex is responsible for cholesterol-5,6-epoxide hydrolase (ChEH) activity, which consists in the hydration of cholesterol-5,6-epoxides (5,6-EC) into cholestane-3beta,5alpha,6beta-triol (CT). The precise role of each component of this complex has not been described yet. This is 3-beta-hydroxysteroid-Delta(8),Delta(7)-isomerase from Homo sapiens (Human).